We begin with the raw amino-acid sequence, 240 residues long: Putative protein FAM10A4 (240 aa).

Residues 38–94 (MGGTATQKAKSEENTKEEKPDSKVEEDLKADEPSSEESDLEIDKEGVIEPDTDAPQE) form a disordered region. Basic and acidic residues predominate over residues 46–69 (AKSEENTKEEKPDSKVEEDLKADE). Over residues 85–94 (IEPDTDAPQE) the composition is skewed to acidic residues. TPR repeat units follow at residues 110 to 143 (ANDK…NPRL), 145 to 177 (ILYA…NPDS), and 179 to 211 (QPYK…DYDE). The segment at 220–240 (VQPRAQKIAEHQRKYERKREE) is disordered. Positions 226 to 240 (KIAEHQRKYERKREE) are enriched in basic and acidic residues.

Belongs to the FAM10 family. Highly expressed in bone marrow and weakly in placenta, pancreas, heart and HeLa cell line.

It localises to the cytoplasm. This is Putative protein FAM10A4 (ST13P4) from Homo sapiens (Human).